The following is a 315-amino-acid chain: Eukaryotic translation initiation factor 2 subunit 1 (315 aa).

In terms of domain architecture, S1 motif spans 17-88 (DDVVMVNVRS…DKGYIDLSKR (72 aa)). S49 and S52 each carry phosphoserine. The interval 292–315 (RLEKENAEVDGDDDAEEMEAKTED) is disordered. A compositionally biased stretch (acidic residues) spans 299 to 308 (EVDGDDDAEE).

This sequence belongs to the eIF-2-alpha family. As to quaternary structure, eukaryotic translation initiation factor 2 eIF2 is a heterotrimeric complex composed of an alpha, a beta and a gamma subunit. In terms of processing, phosphorylation at Ser-49 and Ser-52 stabilizes the eIF-2/GDP/eIF2B complex and prevents GDP/GTP exchange reaction, thus impairing the recycling of eIF-2 between successive rounds of initiation and leading to global inhibition of translation, while concomitantly initiating the preferential translation of integrated stress response (ISR)-specific mRNAs.

It localises to the cytoplasm. It is found in the stress granule. The protein resides in the cytosol. Its activity is regulated as follows. Activity is regulated by phosphorylation at Ser-49 and Ser-52, which stabilizes the eIF-2/GDP/eIF2B complex and prevents the eIF2B-mediated exchange of GDP for GTP, thereby preventing the formation of the 43S pre-initiation complex (PIC). This results in the global attenuation of 5' cap-dependent protein synthesis and concomitant translation of ISR-specific mRNAs that contain a short upstream open reading frame (uORF) in their 5' UTR. Its function is as follows. Functions in the early steps of protein synthesis by forming a ternary complex with GTP and initiator tRNA. This complex binds to a 40S ribosomal subunit, followed by mRNA binding to form a 43S pre-initiation complex. Junction of the 60S ribosomal subunit to form the 80S initiation complex is preceded by hydrolysis of the GTP bound to eIF-2 and release of an eIF-2-GDP binary complex. In order for eIF-2 to recycle and catalyze another round of initiation, the GDP bound to eIF-2 must exchange with GTP by way of a reaction catalyzed by eIF2B. EIF2S1/eIF2-alpha is a key component of the integrated stress response (ISR), required for adaptation to various stress: phosphorylation by metabolic-stress sensing protein kinases in response to stress converts EIF2S1/eIF-2-alpha in a global protein synthesis inhibitor, leading to a attenuation of cap-dependent translation, while concomitantly initiating the preferential translation of ISR-specific mRNAs, such as the transcriptional activators ATF4 and QRICH1. The sequence is that of Eukaryotic translation initiation factor 2 subunit 1 (eif2s1) from Xenopus tropicalis (Western clawed frog).